The primary structure comprises 254 residues: Nickel import ATP-binding protein NikO (254 aa).

Residues 5–246 (FELQGVQFAY…TALLRRARLL (242 aa)) enclose the ABC transporter domain. 37 to 44 (GANGSGKS) is a binding site for ATP.

Belongs to the ABC transporter superfamily. In terms of assembly, forms an energy-coupling factor (ECF) transporter complex composed of an ATP-binding protein (A component, NikO), a transmembrane protein (T component, NikQ) and a fused possible substrate-capture protein (S component, NikMN) of unknown stoichimetry.

The protein resides in the cell inner membrane. The enzyme catalyses Ni(2+)(out) + ATP + H2O = Ni(2+)(in) + ADP + phosphate + H(+). In terms of biological role, part of the energy-coupling factor (ECF) transporter complex NikMNQO involved in nickel import. The complex confers nickel uptake upon expression in E.coli. Shows very low activity with cobalt. Presumably responsible for energy coupling to the transport system. This chain is Nickel import ATP-binding protein NikO, found in Rhodobacter capsulatus (strain ATCC BAA-309 / NBRC 16581 / SB1003).